Here is a 119-residue protein sequence, read N- to C-terminus: MKTNYSNLETQALAKHIRISASKVRRVINEIRGRLYEQAPMILEFMLYRACYPVSQLLSLAAANASHNLGLNKADSVTSEVKVDEGTMLKRFEPRAQGRGYPIHKPTSHITIVIKKKST.

It belongs to the universal ribosomal protein uL22 family. In terms of assembly, part of the 50S ribosomal subunit.

The protein localises to the plastid. The protein resides in the chloroplast. In terms of biological role, this protein binds specifically to 23S rRNA. Functionally, the globular domain of the protein is located near the polypeptide exit tunnel on the outside of the subunit, while an extended beta-hairpin is found that lines the wall of the exit tunnel in the center of the 70S ribosome. The chain is Large ribosomal subunit protein uL22c (rpl22) from Anthoceros angustus (Hornwort).